The following is a 585-amino-acid chain: Zinc finger protein C11D3.17 (585 aa).

2 consecutive C2H2-type zinc fingers follow at residues 31–53 and 59–82; these read FPCD…KACH and IPCP…QRFH. T553 bears the Phosphothreonine mark.

The protein resides in the nucleus. In Schizosaccharomyces pombe (strain 972 / ATCC 24843) (Fission yeast), this protein is Zinc finger protein C11D3.17.